We begin with the raw amino-acid sequence, 808 residues long: Sucrose synthase (808 aa).

The GT-B glycosyltransferase stretch occupies residues 271–753 (MLFRIALISP…GIERVYSTYT (483 aa)).

The protein belongs to the glycosyltransferase 1 family. As to quaternary structure, probably a homotetramer.

It carries out the reaction an NDP-alpha-D-glucose + D-fructose = a ribonucleoside 5'-diphosphate + sucrose + H(+). The catalysed reaction is ADP-alpha-D-glucose + D-fructose = sucrose + ADP + H(+). Its function is as follows. Catalyzes the reversible conversion of sucrose and a nucleotide disphosphate (NDP) into fructose and NDP-glucose; although the reaction is freely reversible in vitro, the physiological reaction seems to be sucrose cleavage. Unlike characterized plant enzymes prefers ADP as a cosubstrate, whereas plants prefer UDP. Its preference for ADP over UDP suggests it may directly link sucrose and glycogen metabolism. The chain is Sucrose synthase from Thermosynechococcus vestitus (strain NIES-2133 / IAM M-273 / BP-1).